Here is a 92-residue protein sequence, read N- to C-terminus: Small ribosomal subunit protein bS20 (92 aa).

It belongs to the bacterial ribosomal protein bS20 family.

In terms of biological role, binds directly to 16S ribosomal RNA. This is Small ribosomal subunit protein bS20 from Methylacidiphilum infernorum (isolate V4) (Methylokorus infernorum (strain V4)).